Consider the following 85-residue polypeptide: Large ribosomal subunit protein bL27 (85 aa).

This sequence belongs to the bacterial ribosomal protein bL27 family.

In Sodalis glossinidius (strain morsitans), this protein is Large ribosomal subunit protein bL27.